A 367-amino-acid polypeptide reads, in one-letter code: Uracil nucleotide/cysteinyl leukotriene receptor (367 aa).

The disordered stretch occupies residues 1-28 (MSKRSWWAGSRKPPREMLKLSGSDSSQS). Topologically, residues 1–64 (MSKRSWWAGS…TPLENMLFAS (64 aa)) are extracellular. Asn-42 carries N-linked (GlcNAc...) asparagine glycosylation. The chain crosses the membrane as a helical span at residues 65–85 (FYLLDFILALVGNTLALWLFI). Over 86–92 (RDHKSGT) the chain is Cytoplasmic. Residues 93–113 (PANVFLMHLAVADLSCVLVLP) traverse the membrane as a helical segment. Residues 114–133 (TRLVYHFSGNHWPFGEIACR) lie on the Extracellular side of the membrane. A disulfide bond links Cys-132 and Cys-209. A helical transmembrane segment spans residues 134–154 (LTGFLFYLNMYASIYFLTCIS). Residues 155 to 175 (ADRFLAIVHPVKSLKLRRPLY) lie on the Cytoplasmic side of the membrane. The chain crosses the membrane as a helical span at residues 176–196 (AHLACAFLWVVVAVAMAPLLV). Residues 197-223 (SPQTVQTNHTVVCLQLYREKASHHALV) lie on the Extracellular side of the membrane. N-linked (GlcNAc...) asparagine glycosylation occurs at Asn-204. The helical transmembrane segment at 224–244 (SLAVAFTFPFITTVTCYLLII) threads the bilayer. The Cytoplasmic segment spans residues 245-260 (RSLRQGLRVEKRLKTK). A helical transmembrane segment spans residues 261–281 (AVRMIAIVLAIFLVCFVPYHV). Asn-282 carries an N-linked (GlcNAc...) asparagine glycan. The Extracellular portion of the chain corresponds to 282-308 (NRSVYVLHYRSHGASCATQRILALANR). Residues 309-329 (ITSCLTSLNGALDPIMYFFVA) form a helical membrane-spanning segment. Residues 330 to 367 (EKFRHALCNLLCGKRLKGPPPSFEGKTNESSLSAKSEL) are Cytoplasmic-facing.

It belongs to the G-protein coupled receptor 1 family. In terms of tissue distribution, expressed in brain, kidney, heart and umbilical vein endothelial cells. Highest level in brain.

The protein localises to the cell membrane. Dual specificity receptor for uracil nucleotides and cysteinyl leukotrienes (CysLTs). Signals through G(i) and inhibition of adenylyl cyclase. May mediate brain damage by nucleotides and CysLTs following ischemia. The chain is Uracil nucleotide/cysteinyl leukotriene receptor (GPR17) from Homo sapiens (Human).